The chain runs to 181 residues: Oligoribonuclease (181 aa).

In terms of domain architecture, Exonuclease spans 8–171; the sequence is LIWIDLEMTG…DDIRESIAEL (164 aa). Residue Tyr-129 is part of the active site.

Belongs to the oligoribonuclease family.

It localises to the cytoplasm. Its function is as follows. 3'-to-5' exoribonuclease specific for small oligoribonucleotides. The polypeptide is Oligoribonuclease (Vibrio cholerae serotype O1 (strain ATCC 39541 / Classical Ogawa 395 / O395)).